The following is a 442-amino-acid chain: tRNA-2-methylthio-N(6)-dimethylallyladenosine synthase (442 aa).

The MTTase N-terminal domain maps to 5–122 (KKVFIKTLGC…LPEMIKRKQS (118 aa)). Residues C14, C51, C85, C159, C163, and C166 each coordinate [4Fe-4S] cluster. In terms of domain architecture, Radical SAM core spans 145–378 (KAEGAKAYVS…DLLNSNAQII (234 aa)). The 63-residue stretch at 380 to 442 (RQMVGTEQRI…LPNSLRGELI (63 aa)) folds into the TRAM domain.

The protein belongs to the methylthiotransferase family. MiaB subfamily. As to quaternary structure, monomer. Requires [4Fe-4S] cluster as cofactor.

It localises to the cytoplasm. It carries out the reaction N(6)-dimethylallyladenosine(37) in tRNA + (sulfur carrier)-SH + AH2 + 2 S-adenosyl-L-methionine = 2-methylsulfanyl-N(6)-dimethylallyladenosine(37) in tRNA + (sulfur carrier)-H + 5'-deoxyadenosine + L-methionine + A + S-adenosyl-L-homocysteine + 2 H(+). Functionally, catalyzes the methylthiolation of N6-(dimethylallyl)adenosine (i(6)A), leading to the formation of 2-methylthio-N6-(dimethylallyl)adenosine (ms(2)i(6)A) at position 37 in tRNAs that read codons beginning with uridine. This Francisella philomiragia subsp. philomiragia (strain ATCC 25017 / CCUG 19701 / FSC 153 / O#319-036) protein is tRNA-2-methylthio-N(6)-dimethylallyladenosine synthase.